We begin with the raw amino-acid sequence, 210 residues long: Riboflavin kinase (210 aa).

Residues 1 to 81 (MECKERRLIG…DLLRYFNIAS (81 aa)) are H-T-H motif-like. The riboflavin kinase stretch occupies residues 82-210 (IRLIGRVISG…GDIVEVEILL (129 aa)). Residue 91–96 (GLGEGA) participates in CDP binding. Thr120 and Asn122 together coordinate Mg(2+). The FMN site is built by Thr177 and Glu185. 190 to 193 (VKLR) contacts CDP.

Belongs to the archaeal riboflavin kinase family. Mg(2+) is required as a cofactor.

It catalyses the reaction riboflavin + CTP = CDP + FMN + H(+). The protein operates within cofactor biosynthesis; FMN biosynthesis; FMN from riboflavin (CTP route): step 1/1. Functionally, catalyzes the CTP-dependent phosphorylation of riboflavin (vitamin B2) to form flavin mononucleotide (FMN). In Pyrobaculum aerophilum (strain ATCC 51768 / DSM 7523 / JCM 9630 / CIP 104966 / NBRC 100827 / IM2), this protein is Riboflavin kinase (ribK).